A 284-amino-acid polypeptide reads, in one-letter code: Bifunctional protein FolD (284 aa).

Residues 166–168 and Ile-232 contribute to the NADP(+) site; that span reads GAS.

The protein belongs to the tetrahydrofolate dehydrogenase/cyclohydrolase family. In terms of assembly, homodimer.

The enzyme catalyses (6R)-5,10-methylene-5,6,7,8-tetrahydrofolate + NADP(+) = (6R)-5,10-methenyltetrahydrofolate + NADPH. The catalysed reaction is (6R)-5,10-methenyltetrahydrofolate + H2O = (6R)-10-formyltetrahydrofolate + H(+). Its pathway is one-carbon metabolism; tetrahydrofolate interconversion. Its function is as follows. Catalyzes the oxidation of 5,10-methylenetetrahydrofolate to 5,10-methenyltetrahydrofolate and then the hydrolysis of 5,10-methenyltetrahydrofolate to 10-formyltetrahydrofolate. This is Bifunctional protein FolD from Pseudoalteromonas translucida (strain TAC 125).